The chain runs to 158 residues: Small ribosomal subunit protein uS15 (158 aa).

The segment covering 1–10 (MARMHTRRRG) has biased composition (basic residues). The disordered stretch occupies residues 1–66 (MARMHTRRRG…EGVKGTPIPD (66 aa)). The segment covering 21–32 (DPPEWSDIDADA) has biased composition (acidic residues). Basic and acidic residues predominate over residues 33–45 (IEERVVELAEQGH).

The protein belongs to the universal ribosomal protein uS15 family. In terms of assembly, part of the 30S ribosomal subunit.

The sequence is that of Small ribosomal subunit protein uS15 from Haloquadratum walsbyi (strain DSM 16790 / HBSQ001).